The sequence spans 469 residues: Probable ribonuclease FAU-1 (469 aa).

The protein belongs to the FAU-1 family.

In terms of biological role, probable RNase involved in rRNA stability through maturation and/or degradation of precursor rRNAs. Binds to RNA in loop regions with AU-rich sequences. The protein is Probable ribonuclease FAU-1 of Pyrococcus abyssi (strain GE5 / Orsay).